Here is an 82-residue protein sequence, read N- to C-terminus: Immediate early response 3-interacting protein 1 (82 aa).

The next 2 helical transmembrane spans lie at 2-22 and 62-82; these read AFTL…IAVL and VMRV…LLFG.

The protein belongs to the YOS1 family.

The protein localises to the endoplasmic reticulum membrane. Its function is as follows. Regulator of endoplasmic reticulum secretion that acts as a key determinant of brain size. Required for secretion of extracellular matrix proteins. Required for correct brain development by depositing sufficient extracellular matrix proteins for tissue integrity and the proliferation of neural progenitors. Acts as a regulator of the unfolded protein response (UPR). This is Immediate early response 3-interacting protein 1 from Danio rerio (Zebrafish).